The chain runs to 249 residues: Low affinity immunoglobulin gamma Fc region receptor III-A (249 aa).

Residues 1–16 (MWQLLPSTALLLVASA) form the signal peptide. Over 17–198 (RPQAADLPKA…IQGPPVPSTS (182 aa)) the chain is Extracellular. 2 consecutive Ig-like C2-type domains span residues 24-104 (PKAV…LEVH) and 119-172 (EGEP…YFCR). Cystine bridges form between Cys47–Cys88 and Cys127–Cys171. N-linked (GlcNAc...) asparagine glycosylation is found at Asn55, Asn63, Asn166, and Asn179. The helical transmembrane segment at 199–219 (ALLPFWPHIPFAVVMALLFAV) threads the bilayer. The Cytoplasmic segment spans residues 220 to 249 (DTGLYFAMQRHLHNSKRAWENSKVSWKQDP).

In terms of assembly, forms a heterooligomeric complex with ITAM-containing signaling subunits FCER1G. Interacts (via transmembrane domain) with signaling subunits; this interaction is a prerequisite for receptor complex expression on the cell surface and intracellular signal transduction. Binds the Fc region of antigen-complexed IgG.

It localises to the cell membrane. In terms of biological role, receptor for the invariable Fc fragment of immunoglobulin gamma (IgG). Optimally activated upon binding of clustered antigen-IgG complexes displayed on cell surfaces, triggers lysis of antibody-coated cells, a process known as antibody-dependent cellular cytotoxicity (ADCC). Does not bind free monomeric IgG, thus avoiding inappropriate effector cell activation in the absence of antigenic trigger. Mediates IgG effector functions on natural killer (NK) cells. Binds antigen-IgG complexes generated upon infection and triggers NK cell-dependent cytokine production and degranulation to limit viral load and propagation. Fc-binding subunit that associates with FCER1G adapter to form functional signaling complexes. Following the engagement of antigen-IgG complexes, triggers phosphorylation of immunoreceptor tyrosine-based activation motif (ITAM)-containing adapter with subsequent activation of phosphatidylinositol 3-kinase signaling and sustained elevation of intracellular calcium that ultimately drive NK cell activation. Mediates enhanced ADCC in response to afucosylated IgGs. This is Low affinity immunoglobulin gamma Fc region receptor III-A from Mustela putorius furo (European domestic ferret).